A 424-amino-acid chain; its full sequence is S-inosyl-L-homocysteine hydrolase (424 aa).

Substrate is bound by residues D130 and E155. 156–158 is a binding site for NAD(+); that stretch reads TTT. K185 and D189 together coordinate substrate. Residues N190, 219 to 224, E242, N277, 298 to 300, and N346 contribute to the NAD(+) site; these read GYGWCG and AGH.

Belongs to the adenosylhomocysteinase family. It depends on NAD(+) as a cofactor.

Its subcellular location is the cytoplasm. It catalyses the reaction S-inosyl-L-homocysteine + H2O = L-homocysteine + inosine. Its pathway is amino-acid biosynthesis; S-adenosyl-L-methionine biosynthesis. Functionally, catalyzes the hydrolysis of S-inosyl-L-homocysteine (SIH) to L-homocysteine (Hcy) and inosine. Likely functions in a S-adenosyl-L-methionine (SAM) recycling pathway from S-adenosyl-L-homocysteine (SAH) produced from SAM-dependent methylation reactions. Can also catalyze the reverse reaction in vitro, i.e. the synthesis of SIH from Hcy and inosine. The chain is S-inosyl-L-homocysteine hydrolase from Methanopyrus kandleri (strain AV19 / DSM 6324 / JCM 9639 / NBRC 100938).